The chain runs to 61 residues: Small ribosomal subunit protein uS14 (61 aa).

Zn(2+) is bound by residues Cys-24, Cys-27, Cys-40, and Cys-43.

This sequence belongs to the universal ribosomal protein uS14 family. Zinc-binding uS14 subfamily. Part of the 30S ribosomal subunit. Contacts proteins S3 and S10. Requires Zn(2+) as cofactor.

Functionally, binds 16S rRNA, required for the assembly of 30S particles and may also be responsible for determining the conformation of the 16S rRNA at the A site. This Pelobacter propionicus (strain DSM 2379 / NBRC 103807 / OttBd1) protein is Small ribosomal subunit protein uS14.